A 71-amino-acid chain; its full sequence is Small ribosomal subunit protein bS21 (71 aa).

Residues 48–59 show a composition bias toward basic residues; that stretch reads KAAAAVKRHAKK. A disordered region spans residues 48–71; the sequence is KAAAAVKRHAKKVQREQRRRERLY. A compositionally biased stretch (basic and acidic residues) spans 60 to 71; it reads VQREQRRRERLY.

The protein belongs to the bacterial ribosomal protein bS21 family.

This chain is Small ribosomal subunit protein bS21, found in Azotobacter vinelandii (strain DJ / ATCC BAA-1303).